A 550-amino-acid chain; its full sequence is CTP synthase (550 aa).

The segment at 1–271 is amidoligase domain; that stretch reads MTRYIFITGG…DAEVLDVFGM (271 aa). Ser13 is a binding site for CTP. Ser13 is a UTP binding site. 14 to 19 is a binding site for ATP; it reads SLGKGL. Position 54 (Tyr54) interacts with L-glutamine. Asp71 contributes to the ATP binding site. Mg(2+) contacts are provided by Asp71 and Glu145. CTP-binding positions include 152-154, 192-197, and Lys228; these read DIE and KTKPTQ. UTP contacts are provided by residues 192-197 and Lys228; that span reads KTKPTQ. The region spanning 297–549 is the Glutamine amidotransferase type-1 domain; that stretch reads TIAVVGKYTV…IAAAKEHGRL (253 aa). Position 361 (Gly361) interacts with L-glutamine. The Nucleophile; for glutamine hydrolysis role is filled by Cys388. Residues 389–392, Glu412, and Arg477 each bind L-glutamine; that span reads FGMQ. Residues His522 and Glu524 contribute to the active site.

Belongs to the CTP synthase family. Homotetramer.

It catalyses the reaction UTP + L-glutamine + ATP + H2O = CTP + L-glutamate + ADP + phosphate + 2 H(+). The catalysed reaction is L-glutamine + H2O = L-glutamate + NH4(+). It carries out the reaction UTP + NH4(+) + ATP = CTP + ADP + phosphate + 2 H(+). Its pathway is pyrimidine metabolism; CTP biosynthesis via de novo pathway; CTP from UDP: step 2/2. Allosterically activated by GTP, when glutamine is the substrate; GTP has no effect on the reaction when ammonia is the substrate. The allosteric effector GTP functions by stabilizing the protein conformation that binds the tetrahedral intermediate(s) formed during glutamine hydrolysis. Inhibited by the product CTP, via allosteric rather than competitive inhibition. In terms of biological role, catalyzes the ATP-dependent amination of UTP to CTP with either L-glutamine or ammonia as the source of nitrogen. Regulates intracellular CTP levels through interactions with the four ribonucleotide triphosphates. In Caulobacter vibrioides (strain ATCC 19089 / CIP 103742 / CB 15) (Caulobacter crescentus), this protein is CTP synthase.